The sequence spans 247 residues: NH(3)-dependent NAD(+) synthetase (247 aa).

29–36 (GLSGGVDS) contributes to the ATP binding site. Asp-35 provides a ligand contact to Mg(2+). Arg-112 serves as a coordination point for deamido-NAD(+). Thr-132 contacts ATP. Glu-137 contacts Mg(2+). Lys-145 and Asp-152 together coordinate deamido-NAD(+). ATP contacts are provided by Lys-161 and Ser-183. 233-234 (HK) serves as a coordination point for deamido-NAD(+).

This sequence belongs to the NAD synthetase family. As to quaternary structure, homodimer.

The enzyme catalyses deamido-NAD(+) + NH4(+) + ATP = AMP + diphosphate + NAD(+) + H(+). Its pathway is cofactor biosynthesis; NAD(+) biosynthesis; NAD(+) from deamido-NAD(+) (ammonia route): step 1/1. Functionally, catalyzes the ATP-dependent amidation of deamido-NAD to form NAD. Uses ammonia as a nitrogen source. The sequence is that of NH(3)-dependent NAD(+) synthetase from Archaeoglobus fulgidus (strain ATCC 49558 / DSM 4304 / JCM 9628 / NBRC 100126 / VC-16).